The following is a 202-amino-acid chain: Imidazoleglycerol-phosphate dehydratase (202 aa).

Belongs to the imidazoleglycerol-phosphate dehydratase family.

It localises to the cytoplasm. It carries out the reaction D-erythro-1-(imidazol-4-yl)glycerol 3-phosphate = 3-(imidazol-4-yl)-2-oxopropyl phosphate + H2O. It functions in the pathway amino-acid biosynthesis; L-histidine biosynthesis; L-histidine from 5-phospho-alpha-D-ribose 1-diphosphate: step 6/9. The polypeptide is Imidazoleglycerol-phosphate dehydratase (Rhizobium johnstonii (strain DSM 114642 / LMG 32736 / 3841) (Rhizobium leguminosarum bv. viciae)).